The chain runs to 262 residues: Malonyl-[acyl-carrier protein] O-methyltransferase (262 aa).

This sequence belongs to the methyltransferase superfamily.

It carries out the reaction malonyl-[ACP] + S-adenosyl-L-methionine = malonyl-[ACP] methyl ester + S-adenosyl-L-homocysteine. It participates in cofactor biosynthesis; biotin biosynthesis. Its function is as follows. Converts the free carboxyl group of a malonyl-thioester to its methyl ester by transfer of a methyl group from S-adenosyl-L-methionine (SAM). It allows to synthesize pimeloyl-ACP via the fatty acid synthetic pathway. This chain is Malonyl-[acyl-carrier protein] O-methyltransferase, found in Dechloromonas aromatica (strain RCB).